A 478-amino-acid polypeptide reads, in one-letter code: uncharacterized protein (478 aa).

Positions 5 to 85 constitute an RRM domain; the sequence is KRIYVGGLSS…SKLRIEEARP (81 aa). Serine 207 and serine 308 each carry phosphoserine.

The protein resides in the nucleus. It is found in the nucleolus. This is an uncharacterized protein from Schizosaccharomyces pombe (strain 972 / ATCC 24843) (Fission yeast).